We begin with the raw amino-acid sequence, 539 residues long: Alpha-copaene synthase (539 aa).

The Mg(2+) site is built by D290 and D294. Substrate-binding residues include D290, D294, and R432. The short motif at 290-294 is the DDXXD motif element; the sequence is DDTFD.

The protein belongs to the terpene synthase family. In terms of assembly, monomer. The cofactor is Mg(2+). Requires Mn(2+) as cofactor.

The protein resides in the cytoplasm. The catalysed reaction is (2E,6E)-farnesyl diphosphate = alpha-copaene + diphosphate. It carries out the reaction (2E,6E)-farnesyl diphosphate = (+)-germacrene D + diphosphate. It catalyses the reaction (2E,6E)-farnesyl diphosphate = (-)-(E)-beta-caryophyllene + diphosphate. The enzyme catalyses (2E,6E)-farnesyl diphosphate = delta-cadinene + diphosphate. It participates in secondary metabolite biosynthesis; terpenoid biosynthesis. Converts farnesyl diphosphate to the bicyclic olefins alpha-copaene, (E)-beta-caryophyllene, and to the macrocyclic sesquiterpene germacrene D. Also mediates the biosynthesis of minor sesquiterpene hydrocarbons including delta-cadinene. Involved in indirect defense by producing volatile signals attracting natural enemies of herbivores. The protein is Alpha-copaene synthase of Zea mays (Maize).